The primary structure comprises 157 residues: uncharacterized protein (157 aa).

A signal peptide spans 1–26 (MEALRRAHEVALRLLLCRPWASRAAA).

Its subcellular location is the secreted. This is an uncharacterized protein from Homo sapiens (Human).